A 690-amino-acid polypeptide reads, in one-letter code: MAKKKSEDHSGADANDSDYNEEPNFDDPPNFVDNISDEDLLGDMLAQRPSEADGVESVVVVDNMPKVEPSRLDKLKSVINKLFSHCGEIVNVVYPVDEEGNTKGYAFMEYKTASQAEDAVKKLNNHRLDKNYTFAVNLFTDFQKYENIPEKWEPPTVQPFKVQSDLYNFINDPDTYDQYCVAAETAPNCVQVGFWQNTLPEPNELETRERFTDTFVKWSPLGTYVVTFHKPGVAIWGGSSFQKIQKFPHPGTQFVEFSPCENYLVTYGPTPTGQKIIIWDIRTGGEKRSFVGDGMSVLSMFRWSHDDKYVARMGESSIHIYETPSFYLLDLKSIKIPGIRGFSWSPTDNVIAYWVEEQNQIPARVTLMKIPKKREIRNKNLFHVADCKLHWQKSGDYLCVKVDRYSKLKKDKKELDVKFLGMFYNFEIFHMREKEIPVDSIEIRELILAFAWEPIGNKFSIIHGEQNSANVSFYEVNKGVKPSLVKRLEKKSCTHLFWSPRGQFIVMANLTMGTFEFVDTTNDYIISASPDHFRASEVEWDPTGRYVVTGVSSWKVKEDTGFNMYTLQGRIIKRTILKNFVQFLWRPRPPTLLSEEKQKEIKKNLKKYYPTFEQKDRLRLTRASKELLEKRAQLRETFMEYRNKRIAEWKDQKSRRQMLRGHVDTDNLETDEVDEEVVEFLVKEEITLLE.

A compositionally biased stretch (basic and acidic residues) spans 1 to 11 (MAKKKSEDHSG). Residues 1-33 (MAKKKSEDHSGADANDSDYNEEPNFDDPPNFVD) are disordered. Residues 15-25 (NDSDYNEEPNF) are compositionally biased toward acidic residues. The RRM domain occupies 57 to 141 (SVVVVDNMPK…YTFAVNLFTD (85 aa)). WD repeat units follow at residues 207 to 246 (TRERFTDTFVKWSPLGTYVVTFHKPGVAIWGGSSFQKIQK), 292 to 331 (GDGMSVLSMFRWSHDDKYVARMGESSIHIYETPSFYLLDL), 334 to 369 (IKIPGIRGFSWSPTDNVIAYWVEEQNQIPARVTLMK), 442 to 484 (EIRE…KPSL), and 530 to 575 (PDHF…IKRT). A coiled-coil region spans residues 613 to 646 (EQKDRLRLTRASKELLEKRAQLRETFMEYRNKRI).

This sequence belongs to the eIF-3 subunit B family. Component of the eukaryotic translation initiation factor 3 (eIF-3) complex. The eIF-3 complex interacts with pix. Interacts with mxt.

The protein resides in the cytoplasm. Its function is as follows. RNA-binding component of the eukaryotic translation initiation factor 3 (eIF-3) complex, which is involved in protein synthesis of a specialized repertoire of mRNAs and, together with other initiation factors, stimulates binding of mRNA and methionyl-tRNAi to the 40S ribosome. The eIF-3 complex specifically targets and initiates translation of a subset of mRNAs involved in cell proliferation. This chain is Eukaryotic translation initiation factor 3 subunit B, found in Drosophila grimshawi (Hawaiian fruit fly).